A 318-amino-acid chain; its full sequence is ATP phosphoribosyltransferase regulatory subunit (318 aa).

The protein belongs to the class-II aminoacyl-tRNA synthetase family. HisZ subfamily. Heteromultimer composed of HisG and HisZ subunits.

Its subcellular location is the cytoplasm. The protein operates within amino-acid biosynthesis; L-histidine biosynthesis; L-histidine from 5-phospho-alpha-D-ribose 1-diphosphate: step 1/9. Functionally, required for the first step of histidine biosynthesis. May allow the feedback regulation of ATP phosphoribosyltransferase activity by histidine. The chain is ATP phosphoribosyltransferase regulatory subunit from Lactococcus lactis subsp. cremoris (strain MG1363).